A 699-amino-acid chain; its full sequence is Tectonic-like complex member Mks1 (699 aa).

2 disordered regions span residues 101–121 (RRSP…EGEI) and 373–396 (DGFS…IEED). Positions 108–119 (HEGEMEKDKNEG) are enriched in basic and acidic residues. The 127-residue stretch at 434-560 (KRVSLLLELQ…RLQCIRPLGN (127 aa)) folds into the C2 B9-type domain. Residues 632 to 661 (LELGNDSSDDGDSNDDDVRSSSNPDTSRAT) form a disordered region.

Probable component of the tectonic-like complex (also named MKS complex), composed of B9d1, B9d2, Cc2d2a, Mks1 and tctn. As to expression, expressed in chordotonal neurons in the antennae (at protein level). Expressed in spermatids (at protein level).

It is found in the cytoplasm. Its subcellular location is the cytoskeleton. The protein resides in the cilium basal body. The protein localises to the microtubule organizing center. It localises to the centrosome. It is found in the centriole. Functionally, probable component of the tectonic-like complex (also named MKS complex), a complex localized at the transition zone of primary cilia. Required for ciliary structure and function. This chain is Tectonic-like complex member Mks1, found in Drosophila melanogaster (Fruit fly).